The primary structure comprises 294 residues: ATP synthase gamma chain (294 aa).

Belongs to the ATPase gamma chain family. As to quaternary structure, F-type ATPases have 2 components, CF(1) - the catalytic core - and CF(0) - the membrane proton channel. CF(1) has five subunits: alpha(3), beta(3), gamma(1), delta(1), epsilon(1). CF(0) has three main subunits: a, b and c.

The protein resides in the cell membrane. Produces ATP from ADP in the presence of a proton gradient across the membrane. The gamma chain is believed to be important in regulating ATPase activity and the flow of protons through the CF(0) complex. This chain is ATP synthase gamma chain, found in Ruminiclostridium cellulolyticum (strain ATCC 35319 / DSM 5812 / JCM 6584 / H10) (Clostridium cellulolyticum).